The sequence spans 227 residues: UPF0659 protein YMR090W (227 aa).

This sequence belongs to the UPF0659 family.

It localises to the cytoplasm. This is UPF0659 protein YMR090W from Saccharomyces cerevisiae (strain ATCC 204508 / S288c) (Baker's yeast).